The chain runs to 483 residues: Protein adenylyltransferase Fic (483 aa).

A helical membrane pass occupies residues 20–42; sequence AFFFIAGSLATFVFHALTSSSSV. 2 TPR repeats span residues 107–140 and 141–175; these read ALGA…APKH and PEVL…SPSN. Positions 232–237 match the Inhibitory (S/T)XXXE(G/N) motif motif; the sequence is SVGIEG. Residues Glu236 and 317 to 320 each bind ATP; that span reads VGGH. In terms of domain architecture, Fido spans 286-421; it reads ITLKDILELH…IRPFVRFIAD (136 aa). His364 is a catalytic residue. ATP is bound by residues 368 to 375, 400 to 401, and Asn408; these read DGNGRTSR and YY. Positions 464–483 are disordered; it reads SAPEPYESGSGLDSGVNGMP.

Belongs to the fic family. Homodimer.

Its subcellular location is the membrane. It catalyses the reaction L-tyrosyl-[protein] + ATP = O-(5'-adenylyl)-L-tyrosyl-[protein] + diphosphate. The catalysed reaction is L-threonyl-[protein] + ATP = 3-O-(5'-adenylyl)-L-threonyl-[protein] + diphosphate. It carries out the reaction 3-O-(5'-adenylyl)-L-threonyl-[protein] + H2O = L-threonyl-[protein] + AMP + H(+). With respect to regulation, the side chain of Glu-236 determines which of the two opposing activities (AMPylase or de-AMPylase) will take place. In response to endoplasmic reticulum stress, mediates de-AMPylase activity. Adenylyltransferase activity is inhibited by the inhibitory helix present at the N-terminus: Glu-236 binds ATP and competes with ATP-binding at Arg-375, thereby preventing adenylyltransferase activity. In unstressed cells, disengagement of Glu-236 promotes adenylyltransferase activity. Activation dissociates ATP-binding from Glu-236, allowing ordered binding of the entire ATP moiety with the alpha-phosphate in an orientation that is productive for accepting an incoming target hydroxyl side chain. In terms of biological role, protein that can both mediate the addition of adenosine 5'-monophosphate (AMP) to specific residues of target proteins (AMPylation), and the removal of the same modification from target proteins (de-AMPylation), depending on the context. The side chain of Glu-236 determines which of the two opposing activities (AMPylase or de-AMPylase) will take place. Acts as a key regulator of the unfolded protein response (UPR) by mediating AMPylation or de-AMPylation of Hsc70-3/BiP. In unstressed cells, acts as an adenylyltransferase by mediating AMPylation of Hsc70-3/BiP at 'Thr-518', thereby inactivating it. In response to endoplasmic reticulum stress, acts as a phosphodiesterase by mediating removal of ATP (de-AMPylation) from Hsc70-3/BiP at 'Thr-518', leading to restore HSPA5/BiP activity. This Drosophila grimshawi (Hawaiian fruit fly) protein is Protein adenylyltransferase Fic.